The chain runs to 606 residues: Ribonucleoprotein PTB-binding 1 (606 aa).

The segment at 1-41 (MAADVSVTHRPPLSPKSGAEVEAGDAAERRAPEEELPPLDP) is disordered. At Ala-2 the chain carries N-acetylalanine. Phosphoserine is present on residues Ser-6 and Ser-14. A Nuclear localization signal motif is present at residues 45–60 (RKRLEHTERQFRNRRK). RRM domains lie at 59 to 130 (RKIL…LQPT), 132 to 210 (ALLC…WTDA), and 221 to 299 (RCLC…FCAP). The interaction with PTBP1 stretch occupies residues 307–395 (LAALIAAQAT…QTQGQKKPGI (89 aa)). Residues 391–474 (KKPGILGDSP…PPAPVGLRGS (84 aa)) form a disordered region. Over residues 453-462 (LGLGPPAAQL) the composition is skewed to low complexity. Position 463 is a phosphothreonine (Thr-463). Position 474 is a phosphoserine (Ser-474). Pro-488 is subject to Phosphothreonine. Residues 519–564 (GLLGLSPGPNGHSHLLKVRAGGGDMQGWEAPAPQRPLTRPALPSVS) form a disordered region. A phosphoserine mark is found at Ser-562 and His-567. Positions 579–606 (CPRPSPAQKAAMWASTPRASAATTRTPT) are disordered. Over residues 592–606 (ASTPRASAATTRTPT) the composition is skewed to low complexity.

Interacts with PTBP1, RAVER2, VCL and ACTN1. Part of a complex containing RAVER1, VCL and ACTN1.

It localises to the nucleus. The protein localises to the cytoplasm. Functionally, cooperates with PTBP1 to modulate regulated alternative splicing events. Promotes exon skipping. Cooperates with PTBP1 to modulate switching between mutually exclusive exons during maturation of the TPM1 pre-mRNA. The protein is Ribonucleoprotein PTB-binding 1 (RAVER1) of Homo sapiens (Human).